Reading from the N-terminus, the 55-residue chain is ATP synthase F(0) complex subunit 8 (55 aa).

Residues 7–24 (SPWFFIMLTTWLTFSLII) form a helical membrane-spanning segment.

This sequence belongs to the ATPase protein 8 family. In terms of assembly, component of the ATP synthase complex composed at least of ATP5F1A/subunit alpha, ATP5F1B/subunit beta, ATP5MC1/subunit c (homooctomer), MT-ATP6/subunit a, MT-ATP8/subunit 8, ATP5ME/subunit e, ATP5MF/subunit f, ATP5MG/subunit g, ATP5MK/subunit k, ATP5MJ/subunit j, ATP5F1C/subunit gamma, ATP5F1D/subunit delta, ATP5F1E/subunit epsilon, ATP5PF/subunit F6, ATP5PB/subunit b, ATP5PD/subunit d, ATP5PO/subunit OSCP. ATP synthase complex consists of a soluble F(1) head domain (subunits alpha(3) and beta(3)) - the catalytic core - and a membrane F(0) domain - the membrane proton channel (subunits c, a, 8, e, f, g, k and j). These two domains are linked by a central stalk (subunits gamma, delta, and epsilon) rotating inside the F1 region and a stationary peripheral stalk (subunits F6, b, d, and OSCP).

It localises to the mitochondrion membrane. Functionally, subunit 8, of the mitochondrial membrane ATP synthase complex (F(1)F(0) ATP synthase or Complex V) that produces ATP from ADP in the presence of a proton gradient across the membrane which is generated by electron transport complexes of the respiratory chain. ATP synthase complex consist of a soluble F(1) head domain - the catalytic core - and a membrane F(1) domain - the membrane proton channel. These two domains are linked by a central stalk rotating inside the F(1) region and a stationary peripheral stalk. During catalysis, ATP synthesis in the catalytic domain of F(1) is coupled via a rotary mechanism of the central stalk subunits to proton translocation. In vivo, can only synthesize ATP although its ATP hydrolase activity can be activated artificially in vitro. Part of the complex F(0) domain. The sequence is that of ATP synthase F(0) complex subunit 8 from Columbina passerina (Common ground-dove).